We begin with the raw amino-acid sequence, 468 residues long: 3-isopropylmalate dehydratase large subunit (468 aa).

[4Fe-4S] cluster is bound by residues C346, C406, and C409.

This sequence belongs to the aconitase/IPM isomerase family. LeuC type 1 subfamily. As to quaternary structure, heterodimer of LeuC and LeuD. The cofactor is [4Fe-4S] cluster.

The enzyme catalyses (2R,3S)-3-isopropylmalate = (2S)-2-isopropylmalate. It functions in the pathway amino-acid biosynthesis; L-leucine biosynthesis; L-leucine from 3-methyl-2-oxobutanoate: step 2/4. In terms of biological role, catalyzes the isomerization between 2-isopropylmalate and 3-isopropylmalate, via the formation of 2-isopropylmaleate. In Cyanothece sp. (strain PCC 7425 / ATCC 29141), this protein is 3-isopropylmalate dehydratase large subunit.